The primary structure comprises 908 residues: Chloride channel protein 2 (908 aa).

Residues 1 to 95 (MAAATAAAAA…RCHKFLVSRV (95 aa)) lie on the Cytoplasmic side of the membrane. The segment at 24–42 (QYEQTLMYGRYTQELGAFA) is essential for channel gating by both voltage and cell volume. The residue at position 28 (T28) is a Phosphothreonine. The interval 44–57 (EEAARIRLGGPEPW) is modulates channel gating by both voltage and cell volume. 2 consecutive transmembrane segments (helical) span residues 96–129 (GEDWIFLVLLGLLMALVSWAMDYAIAVCLQAQQW) and 138–163 (ILLQYLAWVTYPVVLITFSAGFTQIL). The Selectivity filter part_1 motif lies at 169-173 (GSGIP). Chloride is bound at residue S170. An intramembrane region (helical) is located at residues 172 to 179 (IPEMKTIL). 2 helical membrane passes run 188–206 (LTLKTFVAKVIGLTCALGS) and 213–231 (EGPFVHIASMCAALLSKFL). Positions 211–215 (GKEGP) match the Selectivity filter part_2 motif. Intramembrane regions (helical) lie at residues 247-259 (MLAAACAVGVGCC) and 263-271 (PIGGVLFSI). The next 5 helical transmembrane spans lie at 283–303 (YWRGFFAATFSAFIFRVLAVW), 329–357 (LPAFAVIGIASGFGGALFVYLNRKIVQVM), 366–385 (FLMRKRLLFPALVTLLISTL), 437–457 (ANVFLTLVIFILMKFWMSALA), and 465–488 (GAFMPVFVIGAAFGRLVGESMAAW). The short motif at 465-469 (GAFMP) is the Selectivity filter part_3 element. F467 is a binding site for chloride. Residues 505 to 519 (GGYAVVGAAALAGAV) constitute an intramembrane region (helical). Positions 520 to 521 (TH) form an intramembrane region, note=Loop between two helices. The helical intramembrane region spans 522-533 (TVSTAVIVFELT). The note=Loop between two helices intramembrane region spans 534–538 (GQIAH). The helical transmembrane segment at 539–556 (ILPVMIAVILANAVAQSL) threads the bilayer. Residues 557–908 (QPSLYDSIIR…TPSDSDDKCQ (352 aa)) are Cytoplasmic-facing. Y561 is a chloride binding site. The CBS 1 domain occupies 592-650 (MVRDVPHVALSCTFRDLRLALHRTKGRMLALVESPESMILLGSIERSQVVALLGAQLSP). The segment covering 653-662 (RRQHMQKLRK) has biased composition (basic residues). The tract at residues 653 to 722 (RRQHMQKLRK…NSTSLQEGTT (70 aa)) is disordered. A compositionally biased stretch (low complexity) spans 666–680 (SPPSDQESPPSSETS). Residues 681–690 (IRFQVNTEDS) are compositionally biased toward polar residues. Residues 698–707 (QTHKPLKPAL) show a composition bias toward basic residues. A compositionally biased stretch (polar residues) spans 711–722 (PSNSTSLQEGTT). S768 is subject to Phosphoserine. In terms of domain architecture, CBS 2 spans 800 to 860 (IDPAPFQLVE…GSVTAQGVKV (61 aa)). The Basolateral membrane sorting signature appears at 822 to 823 (LL). Residues 866–908 (SFRDSATSSSDTETTEVHALWGPRSRHGLPREGTPSDSDDKCQ) are disordered.

It belongs to the chloride channel (TC 2.A.49) family. ClC-2/CLCN2 subfamily. Homodimer. Interacts with auxiliary subunit HEPACAM. Phosphorylated. Activated by dephosphorylation. As to expression, expressed in the adrenal gland and brain. Expressed in intestinal epithelium (at protein level). Expressed in salivary gland (at protein level).

The protein resides in the cell membrane. It localises to the myelin membrane. It is found in the basolateral cell membrane. Its subcellular location is the cell projection. The protein localises to the dendritic spine membrane. The protein resides in the axon. It catalyses the reaction chloride(in) = chloride(out). It carries out the reaction thiocyanate(in) = thiocyanate(out). The enzyme catalyses bromide(in) = bromide(out). The catalysed reaction is nitrate(in) = nitrate(out). It catalyses the reaction iodide(out) = iodide(in). Its activity is regulated as follows. Common gate kinetics are down-regulated by intracellular ATP. Inhibited by AK-42, a derivative of meclofenamate. Inhibited by Cd(2+). Inhibited by Zn(2+) and PKC activation. Inhibited at acidic pH. CCLN2:HEPACAM channel conductance is up-regulated upon hypo-osmolarity. Its function is as follows. Voltage-gated and osmosensitive chloride channel. Forms a homodimeric channel where each subunit has its own ion conduction pathway. Conducts double-barreled currents controlled by two types of gates, two fast glutamate gates that control each subunit independently and a slow common gate that opens and shuts off both subunits simultaneously. Displays inward rectification currents activated upon membrane hyperpolarization and extracellular hypotonicity. Contributes to chloride conductance involved in neuron excitability. In hippocampal neurons, generates a significant part of resting membrane conductance and provides an additional chloride efflux pathway to prevent chloride accumulation in dendrites upon GABA receptor activation. In glia, associates with the auxiliary subunit HEPACAM/GlialCAM at astrocytic processes and myelinated fiber tracts where it may regulate transcellular chloride flux buffering extracellular chloride and potassium concentrations. Regulates aldosterone production in adrenal glands. The opening of CLCN2 channels at hyperpolarized membrane potentials in the glomerulosa causes cell membrane depolarization, activation of voltage-gated calcium channels and increased expression of aldosterone synthase, the rate-limiting enzyme for aldosterone biosynthesis. Contributes to chloride conductance in retinal pigment epithelium involved in phagocytosis of shed photoreceptor outer segments and photoreceptor renewal. Conducts chloride currents at the basolateral membrane of epithelial cells with a role in chloride reabsorption rather than secretion. Permeable to small monovalent anions with chloride &gt; thiocyanate &gt; bromide &gt; nitrate &gt; iodide ion selectivity. This Mus musculus (Mouse) protein is Chloride channel protein 2 (Clcn2).